The primary structure comprises 269 residues: Type II iodothyronine deiodinase (269 aa).

Residues 1–9 (MGILSVDLL) lie on the Lumenal side of the membrane. A helical; Signal-anchor for type III membrane protein transmembrane segment spans residues 10–34 (ITLQILPVFFSNCLFLALYDSVILL). The Cytoplasmic portion of the chain corresponds to 35–269 (KHVVLLLSRS…KNFSKRUKKT (235 aa)). The active site involves Sec-133. 2 non-standard amino acids (selenocysteine) are found at residues Sec-133 and Sec-266.

The protein belongs to the iodothyronine deiodinase family. As to quaternary structure, predominantly monomer. Can form homodimers but homodimerization is not essential for enzyme activity. Interacts with USP20 and USP33. Interacts with MARCHF6. In terms of processing, ubiquitinated by MARCHF6, leading to its degradation by the proteasome. Deubiquitinated by USP20 and USP33. As to expression, more expressed in pituitary than in brain, low to undetectable levels in thyroid and skeletal muscle.

Its subcellular location is the endoplasmic reticulum membrane. It carries out the reaction 3,3',5-triiodo-L-thyronine + iodide + A + H(+) = L-thyroxine + AH2. The catalysed reaction is 3,3'-diiodo-L-thyronine + iodide + A + H(+) = 3,3',5'-triiodo-L-thyronine + AH2. The enzyme catalyses 3'-iodo-L-thyronine + iodide + A + H(+) = 3',5'-diiodo-L-thyronine + AH2. It catalyses the reaction 3,3'-diiodothyronamine + iodide + A + H(+) = 3,3',5'-triiodothyronamine + AH2. It carries out the reaction 3'-iodothyronamine + iodide + A + H(+) = 3',5'-diiodothyronamine + AH2. In terms of biological role, plays a crucial role in the metabolism of thyroid hormones (TH) and has specific roles in TH activation and inactivation by deiodination.Catalyzes the deiodination of L-thyroxine (T4) to 3,5,3'-triiodothyronine (T3) and 3,3',5'-triiodothyronine (rT3) to 3,3'-diiodothyronine (3,3'-T2) via outer-ring deiodination (ORD). Catalyzes the deiodination of 3',5'-diiodothyronine (3',5'-T2) to 3'-monoiodothyronine (3'-T1) via ORD. Catalyzes the phenolic ring deiodinations of 3,3',5'-triiodothyronamine and 3',5'- diiodothyronamine. This is Type II iodothyronine deiodinase (DIO2) from Sus scrofa (Pig).